Here is a 340-residue protein sequence, read N- to C-terminus: Probable D,D-dipeptide transport system permease protein DdpB (340 aa).

At 1–11 the chain is on the periplasmic side; the sequence is MTFWSILRQRC. A helical transmembrane segment spans residues 12–32; it reads WGLVLVVAGVCVITFIISHLI. The Cytoplasmic portion of the chain corresponds to 33-104; that stretch reads PGDPARLLAG…IFFPATLELA (72 aa). An ABC transmembrane type-1 domain is found at 97 to 327; the sequence is FPATLELAFG…LVNLVVDLLY (231 aa). The chain crosses the membrane as a helical span at residues 105-125; sequence FGALLLALLIGIPLGILSAVW. Residues 126–135 lie on the Periplasmic side of the membrane; the sequence is RNRWLDHLVR. The chain crosses the membrane as a helical span at residues 136–156; sequence IMAITGISTPAFWLGLGVIVL. Residues 157 to 199 are Cytoplasmic-facing; it reads FYGHLQILPGGGRLDDWLDPPTHVTGFYLLDALLEGNGEVFFN. A helical transmembrane segment spans residues 200-220; that stretch reads ALQHLILPALTLAFVHLGIVA. The Periplasmic segment spans residues 221–246; sequence RQIRSAMLEQLSEDYIRTARASGLPG. The helical transmembrane segment at 247–269 threads the bilayer; sequence WYIVLCYALPNALIPSITVLGLA. The Cytoplasmic portion of the chain corresponds to 270–279; that stretch reads LGDLLYGAVL. A helical transmembrane segment spans residues 280 to 300; the sequence is TETVFAWPGMGAWVVTSIQAL. Position 301 (Asp301) is a topological domain, periplasmic. Residues 302–322 form a helical membrane-spanning segment; the sequence is FPAVMGFAVVVSFAYVLVNLV. Residues 323–340 are Cytoplasmic-facing; the sequence is VDLLYLWIDPRIGRGGGE.

This sequence belongs to the binding-protein-dependent transport system permease family. OppBC subfamily. As to quaternary structure, the complex is composed of two ATP-binding proteins (DdpD and DdpF), two transmembrane proteins (DdpB and DdpC) and a solute-binding protein (DdpA).

The protein resides in the cell inner membrane. Its function is as follows. Part of the ABC transporter complex DdpABCDF, which is probably involved in D,D-dipeptide transport. Probably responsible for the translocation of the substrate across the membrane. This is Probable D,D-dipeptide transport system permease protein DdpB (ddpB) from Escherichia coli (strain K12).